Consider the following 2096-residue polypeptide: HEAT repeat-containing protein 1 homolog (2096 aa).

The HEAT repeat unit spans residues 2058 to 2096 (TVPFIAELLEDEHQRVEKNTRTGVQELETILGESVQKYL).

Belongs to the HEATR1/UTP10 family. As to quaternary structure, part of the small subunit (SSU) processome, composed of more than 70 proteins and the RNA chaperone small nucleolar RNA (snoRNA) U3. Interacts with MYC; the interaction is required for localization of MYC to the nucleolus.

The protein localises to the nucleus. Its subcellular location is the nucleolus. Its function is as follows. Ribosome biogenesis factor; required for recruitment of Myc to nucleoli. Involved in nucleolar processing of pre-18S ribosomal RNA. Required for optimal pre-ribosomal RNA transcription by RNA polymerase I. Part of the small subunit (SSU) processome, first precursor of the small eukaryotic ribosomal subunit. During the assembly of the SSU processome in the nucleolus, many ribosome biogenesis factors, an RNA chaperone and ribosomal proteins associate with the nascent pre-rRNA and work in concert to generate RNA folding, modifications, rearrangements and cleavage as well as targeted degradation of pre-ribosomal RNA by the RNA exosome. Involved in neuronal-lineage cell proliferation during larval development. This is HEAT repeat-containing protein 1 homolog from Drosophila melanogaster (Fruit fly).